The sequence spans 352 residues: Dolichol-phosphate mannosyltransferase (352 aa).

Residues 1 to 229 are Cytoplasmic-facing; the sequence is MKVSVIIPTY…HIYRLMKWEG (229 aa). Residues Pro-8, Tyr-10, Glu-12, Val-37, Asp-39, Asp-89, Ala-90, Asp-91, Gln-93, Arg-117, Val-156, Lys-178, Arg-202, and Lys-208 each coordinate GDP-alpha-D-mannose. Residues Asp-91 and Gln-93 each contribute to the Mg(2+) site. Residues Asp-91 and Gln-93 each coordinate Mn(2+). The chain crosses the membrane as a helical span at residues 230–256; it reads EIDRIVKFSIVGLSGILVNEGFLWLFV. The Extracellular portion of the chain corresponds to 257–261; the sequence is NLGIP. A helical membrane pass occupies residues 262–286; sequence KEIAVIPAVELSILNNFFWNDIWTF. The Cytoplasmic segment spans residues 287–293; sequence KDIRRGS. A helical transmembrane segment spans residues 294 to 320; the sequence is IFSRLLKFHIAALSGAVVNFIVYWILL. At 321 to 325 the chain is on the extracellular side; that stretch reads FLGIH. The helical transmembrane segment at 326-350 threads the bilayer; it reads YLIANLVGIVLSFGVRYVINRHVTW. At 351 to 352 the chain is on the cytoplasmic side; that stretch reads AT.

This sequence belongs to the glycosyltransferase 2 family. Requires Mg(2+) as cofactor. Mn(2+) is required as a cofactor. Ca(2+) serves as cofactor.

The protein localises to the cell membrane. It catalyses the reaction a di-trans,poly-cis-dolichyl phosphate + GDP-alpha-D-mannose = a di-trans,poly-cis-dolichyl beta-D-mannosyl phosphate + GDP. The protein operates within protein modification; protein glycosylation. Functionally, transfers mannose from GDP-mannose to dolichol monophosphate to form dolichol phosphate mannose (Dol-P-Man) which is the mannosyl donor in pathways leading to N-glycosylation, glycosyl phosphatidylinositol membrane anchoring, and O-mannosylation of proteins. In Pyrococcus furiosus (strain ATCC 43587 / DSM 3638 / JCM 8422 / Vc1), this protein is Dolichol-phosphate mannosyltransferase.